Reading from the N-terminus, the 469-residue chain is Deoxyribodipyrimidine photo-lyase (469 aa).

Residues 1–133 form the Photolyase/cryptochrome alpha/beta domain; the sequence is MRLVWFRRDL…IWSAFDDKCV (133 aa). Residue Glu107 coordinates (6R)-5,10-methylene-5,6,7,8-tetrahydrofolate.

The protein belongs to the DNA photolyase class-1 family. As to quaternary structure, monomer. Requires FAD as cofactor. (6R)-5,10-methylene-5,6,7,8-tetrahydrofolate is required as a cofactor.

It catalyses the reaction cyclobutadipyrimidine (in DNA) = 2 pyrimidine residues (in DNA).. Involved in repair of UV radiation-induced DNA damage. Catalyzes the light-dependent monomerization (300-600 nm) of cyclobutyl pyrimidine dimers (in cis-syn configuration), which are formed between adjacent bases on the same DNA strand upon exposure to ultraviolet radiation. The sequence is that of Deoxyribodipyrimidine photo-lyase (phrA) from Vibrio cholerae serotype O1 (strain ATCC 39315 / El Tor Inaba N16961).